The primary structure comprises 234 residues: Ubiquitin thioesterase OTUB2 (234 aa).

The 192-residue stretch at 40-231 folds into the OTU domain; that stretch reads TAIRKTKGDG…TSHYNILYAA (192 aa). Asp-48 is a catalytic residue. The Nucleophile role is filled by Cys-51. Residue His-224 is part of the active site.

Belongs to the peptidase C65 family. In terms of tissue distribution, widely expressed. Expressed at higher level in brain.

The enzyme catalyses Thiol-dependent hydrolysis of ester, thioester, amide, peptide and isopeptide bonds formed by the C-terminal Gly of ubiquitin (a 76-residue protein attached to proteins as an intracellular targeting signal).. Functionally, hydrolase that can remove conjugated ubiquitin from proteins in vitro and may therefore play an important regulatory role at the level of protein turnover by preventing degradation. Mediates deubiquitination of 'Lys-11'-,'Lys-48'- and 'Lys-63'-linked polyubiquitin chains, with a preference for 'Lys-63'-linked polyubiquitin chains. The chain is Ubiquitin thioesterase OTUB2 (OTUB2) from Homo sapiens (Human).